Consider the following 122-residue polypeptide: Small ribosomal subunit protein uS13 (122 aa).

The segment at 92 to 122 is disordered; that stretch reads HRNGLPVRGQRTHTNARTRKGKAKPIAGKKK. Residues 101–122 are compositionally biased toward basic residues; sequence QRTHTNARTRKGKAKPIAGKKK.

This sequence belongs to the universal ribosomal protein uS13 family. In terms of assembly, part of the 30S ribosomal subunit. Forms a loose heterodimer with protein S19. Forms two bridges to the 50S subunit in the 70S ribosome.

Functionally, located at the top of the head of the 30S subunit, it contacts several helices of the 16S rRNA. In the 70S ribosome it contacts the 23S rRNA (bridge B1a) and protein L5 of the 50S subunit (bridge B1b), connecting the 2 subunits; these bridges are implicated in subunit movement. Contacts the tRNAs in the A and P-sites. The polypeptide is Small ribosomal subunit protein uS13 (Erythrobacter litoralis (strain HTCC2594)).